Here is a 176-residue protein sequence, read N- to C-terminus: ATP-dependent protease subunit HslV (176 aa).

The active site involves Thr2. Na(+) is bound by residues Gly157, Cys160, and Thr163.

This sequence belongs to the peptidase T1B family. HslV subfamily. In terms of assembly, a double ring-shaped homohexamer of HslV is capped on each side by a ring-shaped HslU homohexamer. The assembly of the HslU/HslV complex is dependent on binding of ATP.

It localises to the cytoplasm. The enzyme catalyses ATP-dependent cleavage of peptide bonds with broad specificity.. Its activity is regulated as follows. Allosterically activated by HslU binding. In terms of biological role, protease subunit of a proteasome-like degradation complex believed to be a general protein degrading machinery. This is ATP-dependent protease subunit HslV from Erwinia tasmaniensis (strain DSM 17950 / CFBP 7177 / CIP 109463 / NCPPB 4357 / Et1/99).